Consider the following 251-residue polypeptide: Methionine aminopeptidase (251 aa).

Residue histidine 79 participates in substrate binding. A divalent metal cation contacts are provided by aspartate 96, aspartate 107, and histidine 170. Histidine 177 provides a ligand contact to substrate. Residues glutamate 204 and glutamate 235 each contribute to the a divalent metal cation site.

This sequence belongs to the peptidase M24A family. Methionine aminopeptidase type 1 subfamily. As to quaternary structure, monomer. Requires Co(2+) as cofactor. Zn(2+) serves as cofactor. The cofactor is Mn(2+). It depends on Fe(2+) as a cofactor.

It carries out the reaction Release of N-terminal amino acids, preferentially methionine, from peptides and arylamides.. Functionally, removes the N-terminal methionine from nascent proteins. The N-terminal methionine is often cleaved when the second residue in the primary sequence is small and uncharged (Met-Ala-, Cys, Gly, Pro, Ser, Thr, or Val). Requires deformylation of the N(alpha)-formylated initiator methionine before it can be hydrolyzed. This Borreliella burgdorferi (strain ATCC 35210 / DSM 4680 / CIP 102532 / B31) (Borrelia burgdorferi) protein is Methionine aminopeptidase.